Consider the following 222-residue polypeptide: Cytochrome b6 (222 aa).

A helical transmembrane segment spans residues 39-59; the sequence is IFYCLGGITLVCFIIQFATGF. Cysteine 42 contributes to the heme c binding site. Positions 93 and 107 each coordinate heme b. 3 helical membrane-spanning segments follow: residues 97-117, 123-143, and 193-213; these read ASMM…TGGF, LTWI…VTGY, and LHTF…FLMI. Positions 194 and 209 each coordinate heme b.

The protein belongs to the cytochrome b family. PetB subfamily. In terms of assembly, the 4 large subunits of the cytochrome b6-f complex are cytochrome b6, subunit IV (17 kDa polypeptide, PetD), cytochrome f and the Rieske protein, while the 4 small subunits are PetG, PetL, PetM and PetN. The complex functions as a dimer. The cofactor is heme b. Heme c is required as a cofactor.

Its subcellular location is the cellular thylakoid membrane. Functionally, component of the cytochrome b6-f complex, which mediates electron transfer between photosystem II (PSII) and photosystem I (PSI), cyclic electron flow around PSI, and state transitions. The chain is Cytochrome b6 from Prochlorothrix hollandica.